The primary structure comprises 295 residues: ATP synthase gamma chain (295 aa).

This sequence belongs to the ATPase gamma chain family. In terms of assembly, F-type ATPases have 2 components, CF(1) - the catalytic core - and CF(0) - the membrane proton channel. CF(1) has five subunits: alpha(3), beta(3), gamma(1), delta(1), epsilon(1). CF(0) has three main subunits: a, b and c.

The protein localises to the cell inner membrane. Its function is as follows. Produces ATP from ADP in the presence of a proton gradient across the membrane. The gamma chain is believed to be important in regulating ATPase activity and the flow of protons through the CF(0) complex. This chain is ATP synthase gamma chain, found in Methylorubrum populi (strain ATCC BAA-705 / NCIMB 13946 / BJ001) (Methylobacterium populi).